Consider the following 245-residue polypeptide: 4-hydroxy-tetrahydrodipicolinate reductase (245 aa).

Residues 7–12 (GAKGKV), 75–77 (GTT), and 102–105 (APNF) each bind NAD(+). The active-site Proton donor/acceptor is the His132. His133 is a binding site for (S)-2,3,4,5-tetrahydrodipicolinate. Catalysis depends on Lys136, which acts as the Proton donor. 142-143 (GT) serves as a coordination point for (S)-2,3,4,5-tetrahydrodipicolinate.

Belongs to the DapB family.

It is found in the cytoplasm. The catalysed reaction is (S)-2,3,4,5-tetrahydrodipicolinate + NAD(+) + H2O = (2S,4S)-4-hydroxy-2,3,4,5-tetrahydrodipicolinate + NADH + H(+). It carries out the reaction (S)-2,3,4,5-tetrahydrodipicolinate + NADP(+) + H2O = (2S,4S)-4-hydroxy-2,3,4,5-tetrahydrodipicolinate + NADPH + H(+). It participates in amino-acid biosynthesis; L-lysine biosynthesis via DAP pathway; (S)-tetrahydrodipicolinate from L-aspartate: step 4/4. Its function is as follows. Catalyzes the conversion of 4-hydroxy-tetrahydrodipicolinate (HTPA) to tetrahydrodipicolinate. The sequence is that of 4-hydroxy-tetrahydrodipicolinate reductase from Mycobacterium bovis (strain BCG / Pasteur 1173P2).